Here is a 1028-residue protein sequence, read N- to C-terminus: Ubiquitin conjugation factor E4 A (1028 aa).

The interval 33–57 (KEQLKQQSDELPASPDDSDNSVSES) is disordered. Lysine 386 is modified (N6-acetyllysine). The region spanning 949–1023 (DACDEFLDPI…QRWLAERKQQ (75 aa)) is the U-box domain.

Belongs to the ubiquitin conjugation factor E4 family. As to expression, expressed in liver, heart, brain, kidney and testis.

It localises to the cytoplasm. The enzyme catalyses S-ubiquitinyl-[E2 ubiquitin-conjugating enzyme]-L-cysteine + [acceptor protein]-L-lysine = [E2 ubiquitin-conjugating enzyme]-L-cysteine + N(6)-ubiquitinyl-[acceptor protein]-L-lysine.. It participates in protein modification; protein ubiquitination. Functionally, ubiquitin-protein ligase that probably functions as an E3 ligase in conjunction with specific E1 and E2 ligases. May also function as an E4 ligase mediating the assembly of polyubiquitin chains on substrates ubiquitinated by another E3 ubiquitin ligase. Mediates 'Lys-48'-linked polyubiquitination of substrates. In Mus musculus (Mouse), this protein is Ubiquitin conjugation factor E4 A.